The sequence spans 372 residues: Glutamate 5-kinase (372 aa).

An ATP-binding site is contributed by lysine 14. Residues serine 54, aspartate 141, and asparagine 153 each contribute to the substrate site. ATP-binding positions include 173 to 174 (TD) and 215 to 221 (TGGMATK). In terms of domain architecture, PUA spans 280–358 (RGQLVIDAGA…DSIEEVLGYD (79 aa)).

The protein belongs to the glutamate 5-kinase family.

It localises to the cytoplasm. The enzyme catalyses L-glutamate + ATP = L-glutamyl 5-phosphate + ADP. The protein operates within amino-acid biosynthesis; L-proline biosynthesis; L-glutamate 5-semialdehyde from L-glutamate: step 1/2. Functionally, catalyzes the transfer of a phosphate group to glutamate to form L-glutamate 5-phosphate. This Shewanella pealeana (strain ATCC 700345 / ANG-SQ1) protein is Glutamate 5-kinase.